A 509-amino-acid chain; its full sequence is Flotillin-like protein FloT (509 aa).

The Cytoplasmic portion of the chain corresponds to 1-3 (MTM). An intramembrane segment occupies 4–24 (PIIMIIGVVFFLLIALIAVFI). The Cytoplasmic segment spans residues 25–509 (TKYRTAGPDE…KEAKTIQKSE (485 aa)). A PHB domain region spans residues 119 to 301 (AAEQFLGKSK…KIIERQKQIE (183 aa)). Positions 203–509 (RIAQVKRDAD…KEAKTIQKSE (307 aa)) are required for correct localization. Short sequence motifs (EA repeat) lie at residues 342 to 344 (AEA), 357 to 360 (AEAE), 370 to 373 (AEAE), and 390 to 394 (AEAEA). The segment at 485–509 (KGNVKQSINELTNEIKEAKTIQKSE) is not required for correct localization.

This sequence belongs to the band 7/mec-2 family. Flotillin subfamily. As to quaternary structure, homooligomerizes. Oligomerizes in very large complexes in vitro. Interacts with FloA, FtsH, FtsX, OppA, SdhA and SecY in detergent-resistant membrane (DRM) fractions. Interacts with FtsH at midcell. Interacts with FloA. Interacts in vivo with KinC, FloA, FtsH and ResE. Interacts with ResE, colocalizes with ResE in FloT-only membrane rafts. Another study shows nearly complete colocalization with NfeD2, but only minor colocalization with FtsH or KinC.

Its subcellular location is the cell membrane. The protein resides in the membrane raft. Functionally, found in functional membrane microdomains (FMM) that may be equivalent to eukaryotic membrane rafts. FMMs are highly dynamic and increase in number as cells age. FloA and FloT function is partially redundant; double deletions have marked synthetic phenotypes. Flotillins are thought to be important factors in membrane fluidity, especially during periods of rapid growth in rich media. Whether specific proteins are associated with FMMs is controversial; in one study FloT rafts have been shown to include proteins involved in adaptation to stationary phase, while FloA-FloT rafts include proteins involved in differentiation including sporulation, biofilm formation and DNA uptake competence. Another (more finely resolved) study only showed association of NfeD2 with FloT rafts of all the proteins examined. Aids homooligomerization of KinC and KinD but not KinB, may prevent incorrect hetero-association of the above kinases. Simultaneous overexpression of both FloA and FloT leads to defects in cell division and differentiation, in part caused by stabilization of FtsH and its subsequent increased ability to degrade proteins. Cells make more biofilm, are about half as long, have less EzrA and more frequent Z-rings. Involved in spatial organization of membranes, perhaps recruiting proteins (e.g. NfeD2) to specific membrane regions. Plays a role in phosphorylation of master regulator Spo0A, an early sporulation event. Plays a non-redundant role with dynamin-like protein A (dynA) in membrane dynamics and cell shape. The polypeptide is Flotillin-like protein FloT (Bacillus subtilis (strain 168)).